The sequence spans 40 residues: Alpha-conotoxin GIC (40 aa).

The propeptide occupies 1–20 (SDGRNDAAKAFDLISSTVKK). 2 cysteine pairs are disulfide-bonded: cysteine 22–cysteine 28 and cysteine 23–cysteine 36. A ser-Xaa-Pro motif, crucial for potent interaction with nAChR region spans residues 24–26 (SHP). Cysteine amide is present on cysteine 36.

Expressed by the venom duct.

It is found in the secreted. Functionally, alpha-conotoxins bind to the nicotinic acetylcholine receptors (nAChR) and inhibit them. This toxin reversibly blocks neuronal nAChRs (alpha-3/beta-2 = alpha-6 or -3/beta-2 or -3 &gt; alpha-3/beta-4 = alpha-4/beta-2). The protein is Alpha-conotoxin GIC of Conus geographus (Geography cone).